Here is a 308-residue protein sequence, read N- to C-terminus: Protoheme IX farnesyltransferase 2 (308 aa).

9 helical membrane passes run 20–40 (VTKP…FLLA), 47–67 (AVLM…GCAI), 92–114 (IPLK…LLAW), 118–137 (LAAL…LYSL), 144–164 (VYGT…GYCA), 174–194 (LILL…IAIF), 218–238 (LHIV…PLAG), 240–260 (TGVG…LMAL), and 275–295 (QVFG…ALDF).

Belongs to the UbiA prenyltransferase family. Protoheme IX farnesyltransferase subfamily.

It localises to the cell inner membrane. The catalysed reaction is heme b + (2E,6E)-farnesyl diphosphate + H2O = Fe(II)-heme o + diphosphate. It functions in the pathway porphyrin-containing compound metabolism; heme O biosynthesis; heme O from protoheme: step 1/1. Its function is as follows. Converts heme B (protoheme IX) to heme O by substitution of the vinyl group on carbon 2 of heme B porphyrin ring with a hydroxyethyl farnesyl side group. The sequence is that of Protoheme IX farnesyltransferase 2 from Shewanella loihica (strain ATCC BAA-1088 / PV-4).